A 222-amino-acid polypeptide reads, in one-letter code: uncharacterized protein (222 aa).

The disordered stretch occupies residues 142–222 (ARRGGCVHPP…LPDPPSAGHL (81 aa)). The span at 160–169 (QSRSISSRRA) shows a compositional bias: low complexity. Basic residues predominate over residues 182 to 196 (PRRRPHRHRTRPQTR).

It belongs to the Rv1128c/1148c/1588c/1702c/1945/3466 family.

This is an uncharacterized protein from Mycobacterium tuberculosis (strain CDC 1551 / Oshkosh).